The following is a 390-amino-acid chain: Phosphopentomutase (390 aa).

Residues aspartate 14, aspartate 286, histidine 291, aspartate 327, histidine 328, and histidine 339 each coordinate Mn(2+).

The protein belongs to the phosphopentomutase family. The cofactor is Mn(2+).

It is found in the cytoplasm. The enzyme catalyses 2-deoxy-alpha-D-ribose 1-phosphate = 2-deoxy-D-ribose 5-phosphate. It catalyses the reaction alpha-D-ribose 1-phosphate = D-ribose 5-phosphate. The protein operates within carbohydrate degradation; 2-deoxy-D-ribose 1-phosphate degradation; D-glyceraldehyde 3-phosphate and acetaldehyde from 2-deoxy-alpha-D-ribose 1-phosphate: step 1/2. Functionally, isomerase that catalyzes the conversion of deoxy-ribose 1-phosphate (dRib-1-P) and ribose 1-phosphate (Rib-1-P) to deoxy-ribose 5-phosphate (dRib-5-P) and ribose 5-phosphate (Rib-5-P), respectively. This is Phosphopentomutase from Exiguobacterium sibiricum (strain DSM 17290 / CCUG 55495 / CIP 109462 / JCM 13490 / 255-15).